The sequence spans 349 residues: uncharacterized protein (349 aa).

The signal sequence occupies residues 1 to 29 (MKQKYENYFKKRLILNLLIFLLLACSSES).

This is an uncharacterized protein from Borreliella burgdorferi (strain ATCC 35210 / DSM 4680 / CIP 102532 / B31) (Borrelia burgdorferi).